The following is a 425-amino-acid chain: Histone-binding protein RBBP7 (425 aa).

Residue Ala2 is modified to N-acetylalanine. At Ser3 the chain carries Phosphoserine. Lys4 bears the N6-acetyllysine; alternate mark. Lys4 participates in a covalent cross-link: Glycyl lysine isopeptide (Lys-Gly) (interchain with G-Cter in SUMO2); alternate. A Glycyl lysine isopeptide (Lys-Gly) (interchain with G-Cter in ubiquitin); alternate cross-link involves residue Lys4. Residue Thr10 is modified to Phosphothreonine. 7 WD repeats span residues 47-122 (QWLP…KINH), 128-173 (RARY…LRLR), 181-217 (GLSW…KIVD), 228-269 (VVED…HLVD), 275-312 (VNCL…LHTF), 318-369 (EIFQ…LFIH), and 376-403 (ISDF…IWQM). Position 95 is a phosphoserine (Ser95). A Glycyl lysine isopeptide (Lys-Gly) (interchain with G-Cter in SUMO2) cross-link involves residue Lys101. The residue at position 119 (Lys119) is an N6-acetyllysine. A Glycyl lysine isopeptide (Lys-Gly) (interchain with G-Cter in SUMO2) cross-link involves residue Lys155. Residue Lys159 is modified to N6-acetyllysine; alternate. Residue Lys159 forms a Glycyl lysine isopeptide (Lys-Gly) (interchain with G-Cter in SUMO2); alternate linkage. Ser354 is modified (phosphoserine).

This sequence belongs to the WD repeat RBAP46/RBAP48/MSI1 family. Binds directly to helix 1 of the histone fold of histone H4, a region that is not accessible when H4 is in chromatin. Subunit of the type B histone acetyltransferase (HAT) complex, composed of RBBP7 and HAT1. Subunit of the core histone deacetylase (HDAC) complex, which is composed of HDAC1, HDAC2, RBBP4 and RBBP7. The core HDAC complex associates with SIN3A, ARID4B/SAP180, SAP18, SAP30, SAP130, SUDS3/SAP45 and possibly ARID4A/RBP1 and ING1 to form the SIN3 HDAC complex. Component of the nucleosome remodeling and deacetylase (NuRD) repressor complex, composed of core proteins MTA1, MTA2, MTA3, RBBP4, RBBP7, HDAC1, HDAC2, MBD2, MBD3, and peripherally associated proteins CDK2AP1, CDK2AP2, GATAD2A, GATAD2B, CHD3, CHD4 and CHD5. The exact stoichiometry of the NuRD complex is unknown, and some subunits such as MBD2 and MBD3, GATAD2A and GATAD2B, and CHD3, CHD4 and CHD5 define mutually exclusive NuRD complexes. The NuRD complex may interact with MBD3L1. The NuRD complex may interact with MBD3L2. Subunit of the PRC2/EED-EZH2 complex, which is composed of at least EED, EZH2, RBBP4, RBBP7 and SUZ12. The PRC2/EED-EZH2 complex may also associate with HDAC1. Component of the NURF-1 ISWI chromatin remodeling complex (also called the nucleosome-remodeling factor (NURF) complex) at least composed of SMARCA1, BPTF, RBBP4 and RBBP7. Within the complex interacts with SMARCA1. Component of the BPFT-SMARCA1 complex at least composed of SMARCA1, BPFT, RBBP4 and RBBP7; the complex is catalytically inactive and does not remodel chromatin. Within the complex interacts with SMARCA1. Interacts with BRCA1. Interacts with CDK2AP1. Interacts with CENPA. Interacts with CHD3. Interacts with CHD4. Interacts with CREBBP, and this interaction may be enhanced by the binding of phosphorylated CREB1 to CREBBP. Interacts with HDAC7. Interacts with MTA1. Interacts with PWWP2B. Interacts with RB1 (via viral protein-binding domain). Interacts with SUV39H1.

It is found in the nucleus. In terms of biological role, core histone-binding subunit that may target chromatin remodeling factors, histone acetyltransferases and histone deacetylases to their histone substrates in a manner that is regulated by nucleosomal DNA. Component of several complexes which regulate chromatin metabolism. These include the type B histone acetyltransferase (HAT) complex, which is required for chromatin assembly following DNA replication; the core histone deacetylase (HDAC) complex, which promotes histone deacetylation and consequent transcriptional repression; the nucleosome remodeling and histone deacetylase complex (the NuRD complex), which promotes transcriptional repression by histone deacetylation and nucleosome remodeling; and the PRC2/EED-EZH2 complex, which promotes repression of homeotic genes during development; and the NURF (nucleosome remodeling factor) complex. This chain is Histone-binding protein RBBP7 (RBBP7), found in Bos taurus (Bovine).